The sequence spans 345 residues: MKTFQITRPDETIREALTDKINNLTKPKGSLGTLEELALQIGLIQQTLTPELRHPQNIIFAADHGIVDEGVSLSPKEITWQQISNFLHGGAGVNFLCRQHGFELKIVDAGVDYDLPYEKGIINMKVRKSSRNYLYEAAMTEEEMNLCIERGAEVVRQCHAEGCNVLSLGEMGIGNTSSSSMWMTCFTHIPLELCVGAGSGLDNAGVHHKYNVLQQALDHYQGDGSAHDLIRYFGGLEMVMAIGAMLQAAELKMIILVDGFIMTNCILAASQLYPEVLHYAIFGHQGDEAGHKLVLDAMGAKPLLNLGLRLGEGTGAICSYPIIDSAIRMINEMDNFAHAAITKYF.

Glu312 (proton acceptor) is an active-site residue.

The protein belongs to the CobT family.

The enzyme catalyses 5,6-dimethylbenzimidazole + nicotinate beta-D-ribonucleotide = alpha-ribazole 5'-phosphate + nicotinate + H(+). It functions in the pathway nucleoside biosynthesis; alpha-ribazole biosynthesis; alpha-ribazole from 5,6-dimethylbenzimidazole: step 1/2. Catalyzes the synthesis of alpha-ribazole-5'-phosphate from nicotinate mononucleotide (NAMN) and 5,6-dimethylbenzimidazole (DMB). In Bacteroides fragilis (strain YCH46), this protein is Nicotinate-nucleotide--dimethylbenzimidazole phosphoribosyltransferase.